A 388-amino-acid polypeptide reads, in one-letter code: Succinyl-diaminopimelate desuccinylase (388 aa).

Histidine 84 contributes to the Zn(2+) binding site. Aspartate 86 is a catalytic residue. Aspartate 115 provides a ligand contact to Zn(2+). Glutamate 146 acts as the Proton acceptor in catalysis. Zn(2+) contacts are provided by glutamate 147, glutamate 175, and histidine 360.

It belongs to the peptidase M20A family. DapE subfamily. Homodimer. The cofactor is Zn(2+). Co(2+) serves as cofactor.

It catalyses the reaction N-succinyl-(2S,6S)-2,6-diaminopimelate + H2O = (2S,6S)-2,6-diaminopimelate + succinate. The protein operates within amino-acid biosynthesis; L-lysine biosynthesis via DAP pathway; LL-2,6-diaminopimelate from (S)-tetrahydrodipicolinate (succinylase route): step 3/3. Catalyzes the hydrolysis of N-succinyl-L,L-diaminopimelic acid (SDAP), forming succinate and LL-2,6-diaminopimelate (DAP), an intermediate involved in the bacterial biosynthesis of lysine and meso-diaminopimelic acid, an essential component of bacterial cell walls. This Helicobacter pylori (strain J99 / ATCC 700824) (Campylobacter pylori J99) protein is Succinyl-diaminopimelate desuccinylase.